Here is a 305-residue protein sequence, read N- to C-terminus: Glycine--tRNA ligase alpha subunit (305 aa).

It belongs to the class-II aminoacyl-tRNA synthetase family. Tetramer of two alpha and two beta subunits.

Its subcellular location is the cytoplasm. The catalysed reaction is tRNA(Gly) + glycine + ATP = glycyl-tRNA(Gly) + AMP + diphosphate. The polypeptide is Glycine--tRNA ligase alpha subunit (Streptococcus pneumoniae (strain Hungary19A-6)).